Here is a 34-residue protein sequence, read N- to C-terminus: Beta/mu-theraphotoxin-Pe1b (34 aa).

3 cysteine pairs are disulfide-bonded: Cys2-Cys16, Cys9-Cys21, and Cys15-Cys28.

It belongs to the neurotoxin 10 (Hwtx-1) family. 54 (ProTx-1) subfamily. As to expression, expressed by the venom gland.

It localises to the secreted. Functionally, ion channel impairing toxin that inhibits several voltage-gated sodium channels. It acts by inhibiting the inward component of the sodium current and by shifting the voltage dependence of channel activation to more depolarized potentials. Its most potent activity is on Nav1.7/SCN9A (IC(50)=167 nM), followed by Nav1.6/SCN8A (IC(50)=696 nM), and Nav1.2/SCN2A (IC(50)=3.54 uM). The protein is Beta/mu-theraphotoxin-Pe1b of Phormingochilus everetti (Malaysian purple earth tiger tarantula).